The following is a 604-amino-acid chain: M-phase inducer phosphatase cdc-25.1 (604 aa).

Disordered stretches follow at residues 33-67 and 127-188; these read PKTL…DVDF and EKRV…PFGD. Positions 44–54 are enriched in polar residues; it reads RDSGVSMTSCS. Over residues 127-138 the composition is skewed to basic and acidic residues; that stretch reads EKRVMSERPTDN. A Rhodanese domain is found at 305–413; the sequence is FDKKYIIVDC…LWSTAECRQI (109 aa). Disordered regions lie at residues 443-464 and 562-588; these read ASLK…CTRS and DFPD…GGHQ.

The protein belongs to the MPI phosphatase family.

The enzyme catalyses O-phospho-L-tyrosyl-[protein] + H2O = L-tyrosyl-[protein] + phosphate. The polypeptide is M-phase inducer phosphatase cdc-25.1 (cdc-25.1) (Caenorhabditis elegans).